The chain runs to 342 residues: MSAFTPASEVILRHSDEFTQRRVLFAGDLQDDLPAQLETALSRVHTQQYHHWQILSRVLGENAHYGLFASAETLADCDTLVYYWPKNKPEAQYQLQNLLALLPVGSDIFVVGENRSGVRSAEQMVADWAKLEKIDSARRCGLYHGRLDSRPTFDADTFWDEYPLGELTVKTLPGVFSRDGLDIGSQLLLSTLKPHMKGKVLDVGCGAGVLSAMLASFSPKVRLTLTDVNAAAIASSKATLAANQLEGDVFASNVYSDISGRFDMIISNPPFHDGVQTSLDAAQTLIRGAVSHLNTGGELRIVANAFLPYPQVLDETFGSHEVLLQNGRFKVYRAVKSRAAKK.

Belongs to the methyltransferase superfamily. RsmC family. As to quaternary structure, monomer.

The protein resides in the cytoplasm. The enzyme catalyses guanosine(1207) in 16S rRNA + S-adenosyl-L-methionine = N(2)-methylguanosine(1207) in 16S rRNA + S-adenosyl-L-homocysteine + H(+). In terms of biological role, specifically methylates the guanine in position 1207 of 16S rRNA in the 30S particle. This Erwinia tasmaniensis (strain DSM 17950 / CFBP 7177 / CIP 109463 / NCPPB 4357 / Et1/99) protein is Ribosomal RNA small subunit methyltransferase C.